The following is a 158-amino-acid chain: Ribosome maturation factor RimP (158 aa).

The protein belongs to the RimP family.

It localises to the cytoplasm. Required for maturation of 30S ribosomal subunits. In Streptococcus suis (strain 98HAH33), this protein is Ribosome maturation factor RimP.